Reading from the N-terminus, the 384-residue chain is Urea transporter 1 (384 aa).

Helical transmembrane passes span 61–81 (ISQVVFVSNPISGILILAGLL), 85–105 (PWWALCGCVGTVVSTLTALLL), 111–131 (AIAAGLQGYNATLVGILMAVF), 138–158 (FWWLIFPVSAMSMTCPVFSSA), and 168–188 (LPVFTLPFNMALSLYLSATGH). N-linked (GlcNAc...) asparagine glycosylation is present at Asn206. The next 4 helical transmembrane spans lie at 250-270 (LMCLHAAIGSLLGVIAGLSLA), 279-299 (GLWGFNSSLACIAIGGMFMAL), 305-325 (LLALACALFTAYFGACMTHLM), and 327-347 (AVHLPACTWSFCLATLLFLLL).

It belongs to the urea transporter family. As to quaternary structure, homotrimer; each subunit contains a pore through which urea permeates. Identified in a complex with STOM. In terms of tissue distribution, expressed in brain, spleen, kidney, testis and lung, with highest levels in brain.

It localises to the cell membrane. It is found in the basolateral cell membrane. It carries out the reaction urea(in) = urea(out). Mediates the transport of urea driven by a concentration gradient across the cell membrane. Mediates the transport of urea across the cell membranes of erythrocytes and the renal inner medullary collecting duct which is critical to the urinary concentrating mechanism. Facilitates water transport in erythrocytes. The protein is Urea transporter 1 (Slc14a1) of Rattus norvegicus (Rat).